A 416-amino-acid chain; its full sequence is Phosphoglycerate kinase (416 aa).

Residues V23, D24, F25, N26, Q38, R39, S62, H63, G65, R66, L121, R122, H168, and R169 each coordinate (2R)-3-phosphoglycerate. G212 provides a ligand contact to ADP. A CDP-binding site is contributed by G212. The AMP site is built by A213 and K214. A213 is a binding site for ATP. A213 is a Mg(2+) binding site. The Mg(2+) site is built by A216 and D217. A CDP-binding site is contributed by D217. K218 contributes to the AMP binding site. Residue K218 participates in ATP binding. G236 provides a ligand contact to ADP. G236 contacts CDP. AMP contacts are provided by G237 and G311. G237 and G311 together coordinate ATP. CDP is bound by residues G336 and F341. F341 serves as a coordination point for ADP. E342 is an AMP binding site. E342, D373, and T374 together coordinate ATP. Residue D373 coordinates Mg(2+).

It belongs to the phosphoglycerate kinase family. Monomer. The cofactor is Mg(2+).

It localises to the cytoplasm. Its subcellular location is the mitochondrion. The catalysed reaction is (2R)-3-phosphoglycerate + ATP = (2R)-3-phospho-glyceroyl phosphate + ADP. Its pathway is carbohydrate degradation; glycolysis; pyruvate from D-glyceraldehyde 3-phosphate: step 2/5. Catalyzes one of the two ATP producing reactions in the glycolytic pathway via the reversible conversion of 1,3-diphosphoglycerate to 3-phosphoglycerate. Both L- and D- forms of purine and pyrimidine nucleotides can be used as substrates, but the activity is much lower on pyrimidines. Negatively regulates the biosynthesis of acetyl-CoA from pyruvate in the mitochondrion. This is Phosphoglycerate kinase (PGK1) from Candida glabrata (strain ATCC 2001 / BCRC 20586 / JCM 3761 / NBRC 0622 / NRRL Y-65 / CBS 138) (Yeast).